A 169-amino-acid chain; its full sequence is MAALLLRHVGRHCLRAHLSPQLCIRNAVPLGTTAKEEMERFWSKNTTLNRPLSPHISIYGWSLPMAMSICHRGTGIALSAGVSLFGLSALLVPGSFESHLEFVKSLCLGPALIHTAKFALVFPLMYHTWNGIRHLMWDLGKGLTISQLHQSGVAVLVLTVLSSVGLAAM.

Residues 1-29 constitute a mitochondrion transit peptide; the sequence is MAALLLRHVGRHCLRAHLSPQLCIRNAVP. Residues 30–62 lie on the Mitochondrial matrix side of the membrane; sequence LGTTAKEEMERFWSKNTTLNRPLSPHISIYGWS. The chain crosses the membrane as a helical span at residues 63 to 92; sequence LPMAMSICHRGTGIALSAGVSLFGLSALLV. Topologically, residues 93-112 are mitochondrial intermembrane; it reads PGSFESHLEFVKSLCLGPAL. Residues 113-137 form a helical membrane-spanning segment; the sequence is IHTAKFALVFPLMYHTWNGIRHLMW. Residue H127 participates in heme b binding. The Mitochondrial matrix segment spans residues 138 to 144; it reads DLGKGLT. Residues 145 to 166 form a helical membrane-spanning segment; sequence ISQLHQSGVAVLVLTVLSSVGL. Residues 167–169 lie on the Mitochondrial intermembrane side of the membrane; it reads AAM.

This sequence belongs to the cytochrome b560 family. As to quaternary structure, component of complex II composed of four subunits: the flavoprotein (FP) SDHA, iron-sulfur protein (IP) SDHB, and a cytochrome b560 composed of SDHC and SDHD. Heme b is required as a cofactor. The N-terminus is blocked.

It localises to the mitochondrion inner membrane. It functions in the pathway carbohydrate metabolism; tricarboxylic acid cycle. In terms of biological role, membrane-anchoring subunit of succinate dehydrogenase (SDH) that is involved in complex II of the mitochondrial electron transport chain and is responsible for transferring electrons from succinate to ubiquinone (coenzyme Q). SDH also oxidizes malate to the non-canonical enol form of oxaloacetate, enol-oxaloacetate. Enol-oxaloacetate, which is a potent inhibitor of the succinate dehydrogenase activity, is further isomerized into keto-oxaloacetate. This chain is Succinate dehydrogenase cytochrome b560 subunit, mitochondrial (SDHC), found in Bos taurus (Bovine).